We begin with the raw amino-acid sequence, 701 residues long: Serologically defined colon cancer antigen 8 homolog (701 aa).

The segment covering 1–13 (MKPSLESDEEEEL) has biased composition (acidic residues). Disordered stretches follow at residues 1-67 (MKPS…VQQS) and 84-114 (ANIQ…GVHN). Residues 45 to 67 (SEPNQQELLSSVQQNPCSPVQQS) are compositionally biased toward polar residues. Coiled coils occupy residues 119-173 (INNQ…LKEY), 203-258 (HKWR…AVAA), and 323-695 (QQVK…AGKR). The interval 364 to 387 (LASEQDKISQAREAARSESKKERE) is disordered.

It is found in the cytoplasm. It localises to the cytoskeleton. Its subcellular location is the microtubule organizing center. The protein resides in the centrosome. The protein localises to the centriole. It is found in the cilium basal body. It localises to the cell junction. Functionally, plays a role in the establishment of cell polarity and epithelial lumen formation. Also plays an essential role in ciliogenesis and subsequent Hedgehog signaling pathway that requires the presence of intact primary cilia for pathway activation. Mechanistically, interacts with and mediates RABEP2 centrosomal localization which is critical for ciliogenesis. The polypeptide is Serologically defined colon cancer antigen 8 homolog (Sdccag8) (Danio rerio (Zebrafish)).